The primary structure comprises 575 residues: Acetolactate synthase large subunit (575 aa).

E57 provides a ligand contact to thiamine diphosphate. FAD contacts are provided by residues R159, 265–286 (HGSY…LGSR), and 308–327 (DIDA…ILSD). Residues 395-475 (QHQMWVAQYY…IKVVLINNHS (81 aa)) form a thiamine pyrophosphate binding region. Residues D446 and N473 each contribute to the Mg(2+) site.

It belongs to the TPP enzyme family. As to quaternary structure, dimer of large and small chains. Mg(2+) serves as cofactor. Requires thiamine diphosphate as cofactor.

It carries out the reaction 2 pyruvate + H(+) = (2S)-2-acetolactate + CO2. The protein operates within amino-acid biosynthesis; L-isoleucine biosynthesis; L-isoleucine from 2-oxobutanoate: step 1/4. It functions in the pathway amino-acid biosynthesis; L-valine biosynthesis; L-valine from pyruvate: step 1/4. The protein is Acetolactate synthase large subunit (ilvB) of Lactococcus lactis subsp. lactis (strain IL1403) (Streptococcus lactis).